The chain runs to 360 residues: Glutamate--cysteine ligase (360 aa).

The protein belongs to the glutamate--cysteine ligase type 2 family. YbdK subfamily.

It catalyses the reaction L-cysteine + L-glutamate + ATP = gamma-L-glutamyl-L-cysteine + ADP + phosphate + H(+). Functionally, catalyzes the synthesis of gamma-glutamylcysteine (gamma-GC), the main low-molecular-weight thiol compound instead of glutathione in halophilic archaea. In Halobacterium salinarum (strain ATCC 29341 / DSM 671 / R1), this protein is Glutamate--cysteine ligase.